A 623-amino-acid chain; its full sequence is Leucine-rich repeat, immunoglobulin-like domain and transmembrane domain-containing protein 1 (623 aa).

The N-terminal stretch at 1–21 (MWVALGMLWLLALGGPHQAWS) is a signal peptide. The LRRNT domain maps to 22–59 (FCPSQCSCSLHILSDGSKARTVVCSDPDLTLPPASIPP). Residues 22 to 526 (FCPSQCSCSL…EVVDAEGTQR (505 aa)) are Lumenal-facing. LRR repeat units lie at residues 60-81 (DTCK…TFRP), 84-105 (RLEQ…MLRG), 108-128 (RLRE…AALK), 132-153 (QLQL…AVHF), and 156-177 (NLTF…LLDT). N-linked (GlcNAc...) asparagine glycosylation is present at Asn-156. Positions 201-253 (NPWVCDCRLYDLVHLLDGWASNLIFIEARLRCGSPRSLAGVAFSQLELRKCQS) constitute an LRRCT domain. The region spanning 266-332 (PLGSTVLLRC…SGDYICQAKN (67 aa)) is the Ig-like C2-type domain. Cysteines 275 and 328 form a disulfide. N-linked (GlcNAc...) asparagine glycosylation is found at Asn-296 and Asn-455. One can recognise a Fibronectin type-III domain in the interval 430-518 (MVRSLKVVGD…QCVIFSTDEV (89 aa)). The stretch at 525 to 548 (QRLINMVVISVAAIIALPPTLLVC) is one LRR 6 repeat. The helical transmembrane segment at 527–547 (LINMVVISVAAIIALPPTLLV) threads the bilayer. Residues 548 to 623 (CCGALRRRCH…GGRRINEYFC (76 aa)) are Cytoplasmic-facing.

Homodimer. Interacts with LRIT2; may form a heterodimer with LRIT2. Interacts (via its N-terminal extracellular domain) with metabotropic glutamate receptor GRM6. Interacts (via its extreme C-terminus) with the scaffold protein FRMPD2 (via the third PDZ domain); the interaction leads to their colocalization in photoreceptor synapses. As to expression, retina, outer segments of photoreceptor cells.

The protein resides in the endoplasmic reticulum membrane. Its subcellular location is the cell projection. It localises to the dendrite. Functionally, photoreceptor synaptic protein essential for normal vision. Involved in synapse formation in cone photoreceptor cells. This Rattus norvegicus (Rat) protein is Leucine-rich repeat, immunoglobulin-like domain and transmembrane domain-containing protein 1 (Lrit1).